The chain runs to 291 residues: ATP synthase subunit a (291 aa).

The next 5 membrane-spanning stretches (helical) occupy residues 48 to 68 (IHLD…LVFW), 108 to 128 (IAPL…MDLI), 161 to 181 (DPNI…FYSI), 241 to 261 (LIFI…SVPW), and 262 to 282 (AIFH…LTIV).

It belongs to the ATPase A chain family. As to quaternary structure, F-type ATPases have 2 components, CF(1) - the catalytic core - and CF(0) - the membrane proton channel. CF(1) has five subunits: alpha(3), beta(3), gamma(1), delta(1), epsilon(1). CF(0) has three main subunits: a(1), b(2) and c(9-12). The alpha and beta chains form an alternating ring which encloses part of the gamma chain. CF(1) is attached to CF(0) by a central stalk formed by the gamma and epsilon chains, while a peripheral stalk is formed by the delta and b chains.

Its subcellular location is the cell inner membrane. Key component of the proton channel; it plays a direct role in the translocation of protons across the membrane. In Acinetobacter baylyi (strain ATCC 33305 / BD413 / ADP1), this protein is ATP synthase subunit a.